The chain runs to 546 residues: CTP synthase (546 aa).

The interval 1 to 265 is amidoligase domain; it reads MTKYVFVTGG…DEIVCHKLGI (265 aa). Ser13 is a binding site for CTP. Ser13 is a UTP binding site. Residues 14–19 and Asp71 each bind ATP; that span reads SLGKGI. Mg(2+) contacts are provided by Asp71 and Glu139. Residues 146–148, 186–191, and Lys222 each bind CTP; these read DIE and KTKPTQ. UTP contacts are provided by residues 186 to 191 and Lys222; that span reads KTKPTQ. One can recognise a Glutamine amidotransferase type-1 domain in the interval 290–543; the sequence is DIAFVGKYVD…VKAAIARHSA (254 aa). Gly351 contributes to the L-glutamine binding site. Cys378 acts as the Nucleophile; for glutamine hydrolysis in catalysis. Residues 379–382, Glu402, and Arg469 contribute to the L-glutamine site; that span reads LGMQ. Residues His516 and Glu518 contribute to the active site.

Belongs to the CTP synthase family. In terms of assembly, homotetramer.

It catalyses the reaction UTP + L-glutamine + ATP + H2O = CTP + L-glutamate + ADP + phosphate + 2 H(+). It carries out the reaction L-glutamine + H2O = L-glutamate + NH4(+). The enzyme catalyses UTP + NH4(+) + ATP = CTP + ADP + phosphate + 2 H(+). Its pathway is pyrimidine metabolism; CTP biosynthesis via de novo pathway; CTP from UDP: step 2/2. Its activity is regulated as follows. Allosterically activated by GTP, when glutamine is the substrate; GTP has no effect on the reaction when ammonia is the substrate. The allosteric effector GTP functions by stabilizing the protein conformation that binds the tetrahedral intermediate(s) formed during glutamine hydrolysis. Inhibited by the product CTP, via allosteric rather than competitive inhibition. Functionally, catalyzes the ATP-dependent amination of UTP to CTP with either L-glutamine or ammonia as the source of nitrogen. Regulates intracellular CTP levels through interactions with the four ribonucleotide triphosphates. The polypeptide is CTP synthase (Azoarcus sp. (strain BH72)).